A 342-amino-acid polypeptide reads, in one-letter code: tRNA N6-adenosine threonylcarbamoyltransferase (342 aa).

Residues His-111 and His-115 each coordinate Fe cation. Substrate contacts are provided by residues 133-137 (VVSGG), Asp-166, Gly-179, Asp-183, and Asn-273. Asp-301 contributes to the Fe cation binding site.

It belongs to the KAE1 / TsaD family. It depends on Fe(2+) as a cofactor.

Its subcellular location is the cytoplasm. The catalysed reaction is L-threonylcarbamoyladenylate + adenosine(37) in tRNA = N(6)-L-threonylcarbamoyladenosine(37) in tRNA + AMP + H(+). Its function is as follows. Required for the formation of a threonylcarbamoyl group on adenosine at position 37 (t(6)A37) in tRNAs that read codons beginning with adenine. Is involved in the transfer of the threonylcarbamoyl moiety of threonylcarbamoyl-AMP (TC-AMP) to the N6 group of A37, together with TsaE and TsaB. TsaD likely plays a direct catalytic role in this reaction. The protein is tRNA N6-adenosine threonylcarbamoyltransferase of Trichlorobacter lovleyi (strain ATCC BAA-1151 / DSM 17278 / SZ) (Geobacter lovleyi).